Reading from the N-terminus, the 140-residue chain is Small ribosomal subunit protein eS17x (140 aa).

Belongs to the eukaryotic ribosomal protein eS17 family.

In Arabidopsis thaliana (Mouse-ear cress), this protein is Small ribosomal subunit protein eS17x (RPS17C).